The chain runs to 62 residues: Photosystem II reaction center protein Z (62 aa).

Transmembrane regions (helical) follow at residues A8–A28 and F41–I61.

The protein belongs to the PsbZ family. In terms of assembly, PSII is composed of 1 copy each of membrane proteins PsbA, PsbB, PsbC, PsbD, PsbE, PsbF, PsbH, PsbI, PsbJ, PsbK, PsbL, PsbM, PsbT, PsbY, PsbZ, Psb30/Ycf12, at least 3 peripheral proteins of the oxygen-evolving complex and a large number of cofactors. It forms dimeric complexes.

The protein localises to the plastid. The protein resides in the chloroplast thylakoid membrane. May control the interaction of photosystem II (PSII) cores with the light-harvesting antenna, regulates electron flow through the 2 photosystem reaction centers. PSII is a light-driven water plastoquinone oxidoreductase, using light energy to abstract electrons from H(2)O, generating a proton gradient subsequently used for ATP formation. The sequence is that of Photosystem II reaction center protein Z from Acorus gramineus (Dwarf sweet flag).